The primary structure comprises 162 residues: Caveolin-2 (162 aa).

At 1-86 the chain is on the cytoplasmic side; sequence MGLETEKADV…FEISKYVMYK (86 aa). Position 19 is a phosphotyrosine; by SRC (Y19). Phosphoserine occurs at positions 20 and 23. Y27 carries the phosphotyrosine; by SRC modification. A Phosphoserine modification is found at S36. The helical intramembrane region spans 87 to 107; sequence FLTVFLAIPLAFLAGILFATL. The Cytoplasmic segment spans residues 108 to 162; that stretch reads SCLHIWIIMPFVKTCLMVLPSVQTIWKSVTDAIIAPLCTSIGRSFSSVSLQLSQD.

This sequence belongs to the caveolin family. In terms of assembly, monomer or homodimer. Interacts with CAV1; the interaction forms a stable heterooligomeric complex that is required for targeting to lipid rafts and for caveolae formation. Tyrosine phosphorylated forms do not form heterooligomers with the Tyr-19-phosphorylated form existing as a monomer or dimer, and the Tyr-27-form as a monomer only. Interacts (tyrosine phosphorylated form) with the SH2 domain-containing proteins, RASA1, NCK1 and SRC. Interacts (tyrosine phosphorylated form) with INSR, the interaction (Tyr-27-phosphorylated form) is increased on insulin stimulation. Interacts (Tyr-19 phosphorylated form) with MAPK1 (phosphorylated form); the interaction, promoted by insulin, leads to nuclear location and MAPK1 activation. Interacts with STAT3; the interaction is increased on insulin-induced tyrosine phosphorylation leading to STAT activation. In terms of processing, phosphorylated on serine and tyrosine residues. CAV1 promotes phosphorylation on Ser-23 which then targets the complex to the plasma membrane, lipid rafts and caveolae. Phosphorylation on Ser-36 appears to modulate mitosis in endothelial cells. Phosphorylation on both Tyr-19 and Tyr-27 is required for insulin-induced 'Ser-727' phosphorylation of STAT3 and its activation. Phosphorylation on Tyr-19 is required for insulin-induced phosphorylation of MAPK1 and DNA binding of STAT3. Tyrosine phosphorylation is induced by both EGF and insulin (By. similarity).

The protein localises to the nucleus. It is found in the cytoplasm. The protein resides in the golgi apparatus membrane. Its subcellular location is the cell membrane. It localises to the membrane. The protein localises to the caveola. In terms of biological role, may act as a scaffolding protein within caveolar membranes. Interacts directly with G-protein alpha subunits and can functionally regulate their activity. Acts as an accessory protein in conjunction with CAV1 in targeting to lipid rafts and driving caveolae formation. The Ser-36 phosphorylated form has a role in modulating mitosis in endothelial cells. Positive regulator of cellular mitogenesis of the MAPK signaling pathway. Required for the insulin-stimulated nuclear translocation and activation of MAPK1 and STAT3, and the subsequent regulation of cell cycle progression. The chain is Caveolin-2 (CAV2) from Callithrix jacchus (White-tufted-ear marmoset).